The sequence spans 129 residues: Small ribosomal subunit protein uS11 (129 aa).

Belongs to the universal ribosomal protein uS11 family. In terms of assembly, part of the 30S ribosomal subunit. Interacts with proteins S7 and S18. Binds to IF-3.

Its function is as follows. Located on the platform of the 30S subunit, it bridges several disparate RNA helices of the 16S rRNA. Forms part of the Shine-Dalgarno cleft in the 70S ribosome. The sequence is that of Small ribosomal subunit protein uS11 from Salmonella typhi.